The chain runs to 444 residues: Phosphoribosylamine--glycine ligase (444 aa).

The ATP-grasp domain occupies 109–324 (RNLFKKYEID…FLDVCFAIAE (216 aa)). Position 140–202 (140–202 (MTSLGKDVVV…EEKLVGVEFT (63 aa))) interacts with ATP. Mg(2+)-binding residues include Q282, E294, and N296. The Mn(2+) site is built by Q282, E294, and N296.

It belongs to the GARS family. It depends on Mg(2+) as a cofactor. Mn(2+) serves as cofactor.

It carries out the reaction 5-phospho-beta-D-ribosylamine + glycine + ATP = N(1)-(5-phospho-beta-D-ribosyl)glycinamide + ADP + phosphate + H(+). Its pathway is purine metabolism; IMP biosynthesis via de novo pathway; N(1)-(5-phospho-D-ribosyl)glycinamide from 5-phospho-alpha-D-ribose 1-diphosphate: step 2/2. This is Phosphoribosylamine--glycine ligase from Methanococcus maripaludis (strain C7 / ATCC BAA-1331).